An 87-amino-acid chain; its full sequence is Exodeoxyribonuclease 7 small subunit (87 aa).

Belongs to the XseB family. As to quaternary structure, heterooligomer composed of large and small subunits.

The protein localises to the cytoplasm. The enzyme catalyses Exonucleolytic cleavage in either 5'- to 3'- or 3'- to 5'-direction to yield nucleoside 5'-phosphates.. Functionally, bidirectionally degrades single-stranded DNA into large acid-insoluble oligonucleotides, which are then degraded further into small acid-soluble oligonucleotides. The protein is Exodeoxyribonuclease 7 small subunit of Xanthomonas campestris pv. campestris (strain 8004).